A 46-amino-acid polypeptide reads, in one-letter code: Toxin Up-1 (46 aa).

The protein localises to the secreted. Its subcellular location is the nematocyst. It localises to the target cell membrane. In terms of biological role, this toxin is a potent hemolysin devoid of enzymatic activity. Its hemolytic activity is inhibited by sphingomyelin but not by cholesterol. In erythrocyte membranes, it causes numerous cell membrane ruptures. It also exerces cytotoxicity to different cell lines. It exerces a positive inotropic effect. Also causes hemorrhage and necrosis by dilation of the blood vessels in the skin, and vascular leakage of fluids and rupture of alveolar walls of the lungs. Is a potent ichtyotoxin. May act as a pore-forming toxin. The sequence is that of Toxin Up-1 from Urticina piscivora (Fish-eating sea anemone).